The following is a 117-amino-acid chain: Putative iron-sulfur cluster insertion protein ErpA (117 aa).

Iron-sulfur cluster-binding residues include C45, C109, and C111.

It belongs to the HesB/IscA family. As to quaternary structure, homodimer. The cofactor is iron-sulfur cluster.

Functionally, required for insertion of 4Fe-4S clusters. This is Putative iron-sulfur cluster insertion protein ErpA from Chromobacterium violaceum (strain ATCC 12472 / DSM 30191 / JCM 1249 / CCUG 213 / NBRC 12614 / NCIMB 9131 / NCTC 9757 / MK).